The chain runs to 120 residues: uncharacterized protein (120 aa).

It to E.coli YiaW.

This is an uncharacterized protein from Escherichia coli (strain K12).